The chain runs to 931 residues: Chitin synthase 7 (931 aa).

2 disordered regions span residues 1 to 34 (MVRHDPFTNSVSEDSSFTPSVNPSTPYPQSGHYR) and 56 to 92 (GDVGYGGRSRRHGSWASVNNEDNEELTPLTTGPASSS). 2 stretches are compositionally biased toward polar residues: residues 7–28 (FTNSVSEDSSFTPSVNPSTPYP) and 83–92 (PLTTGPASSS). A glycan (N-linked (GlcNAc...) asparagine) is linked at N536. 3 helical membrane passes run 573-593 (IFSLIFSWFALANLWLTFSII), 615-635 (INLVFAWVYLAFLMLQLVLAL), and 647-667 (ILTLWVYAFLSFYLIVCSIIL). An N-linked (GlcNAc...) asparagine glycan is attached at N691. The next 2 membrane-spanning stretches (helical) occupy residues 695–715 (GVLVAAIMSTIGIYLIASFLY) and 725–745 (FPQYMLLAPSFTNVLNIYAFC). The interval 763–789 (LPAISSSKQKDGETAVVEEQQRSQGEL) is disordered. N-linked (GlcNAc...) asparagine glycosylation is present at N819. Residues 826–846 (LVVVWLLTNAALAISIQTLNG) form a helical membrane-spanning segment. 2 N-linked (GlcNAc...) asparagine glycosylation sites follow: N866 and N874. Residues 899–919 (AILWTTFALSMVRFIGCVFYW) form a helical membrane-spanning segment.

This sequence belongs to the chitin synthase family. Class III subfamily.

It localises to the cell membrane. The catalysed reaction is [(1-&gt;4)-N-acetyl-beta-D-glucosaminyl](n) + UDP-N-acetyl-alpha-D-glucosamine = [(1-&gt;4)-N-acetyl-beta-D-glucosaminyl](n+1) + UDP + H(+). Polymerizes chitin, a structural polymer of the cell wall and septum, by transferring the sugar moiety of UDP-GlcNAc to the non-reducing end of the growing chitin polymer. This chain is Chitin synthase 7, found in Cryptococcus neoformans var. grubii serotype A (strain H99 / ATCC 208821 / CBS 10515 / FGSC 9487) (Filobasidiella neoformans var. grubii).